Consider the following 423-residue polypeptide: Putative RING-H2 finger protein ATL49 (423 aa).

The chain crosses the membrane as a helical span at residues 43 to 63; the sequence is ILLIIIILSIIFFISGLLHIL. An RING-type; atypical zinc finger spans residues 126-168; that stretch reads CPVCLCEFETEDKLRLLPKCSHAFHVECIDTWLLSHSTCPLCR. 2 disordered regions span residues 213–236 and 377–399; these read NNDS…DMDG and HRIP…KTPS. Residues 379 to 389 show a composition bias toward basic and acidic residues; that stretch reads IPPEESLKSEN.

Belongs to the RING-type zinc finger family. ATL subfamily.

The protein localises to the membrane. It carries out the reaction S-ubiquitinyl-[E2 ubiquitin-conjugating enzyme]-L-cysteine + [acceptor protein]-L-lysine = [E2 ubiquitin-conjugating enzyme]-L-cysteine + N(6)-ubiquitinyl-[acceptor protein]-L-lysine.. It participates in protein modification; protein ubiquitination. In terms of biological role, may be involved in female gametophyte development. In Arabidopsis thaliana (Mouse-ear cress), this protein is Putative RING-H2 finger protein ATL49 (ATL49).